Consider the following 189-residue polypeptide: Small ribosomal subunit protein uS5 (189 aa).

Positions 22-85 (FVDKLVAINR…EAAKRDLIFV (64 aa)) constitute an S5 DRBM domain.

Belongs to the universal ribosomal protein uS5 family. Part of the 30S ribosomal subunit. Contacts proteins S4 and S8.

Functionally, with S4 and S12 plays an important role in translational accuracy. In terms of biological role, located at the back of the 30S subunit body where it stabilizes the conformation of the head with respect to the body. This Sinorhizobium fredii (strain NBRC 101917 / NGR234) protein is Small ribosomal subunit protein uS5.